Reading from the N-terminus, the 338-residue chain is Patr class I histocompatibility antigen, alpha chain G (338 aa).

Positions 1-24 (MVVMAPRTLFLLLSGALTLTETWA) are cleaved as a signal peptide. The alpha-1 stretch occupies residues 25 to 114 (GSHSMRYFSA…LRGYYNQSEA (90 aa)). Topologically, residues 25–308 (GSHSMRYFSA…KQSSLPTIPI (284 aa)) are extracellular. Asparagine 110 is a glycosylation site (N-linked (GlcNAc...) asparagine). An alpha-2 region spans residues 115-206 (SSHTLQWMIG…ENGKEMLQRA (92 aa)). Cystine bridges form between cysteine 125/cysteine 188 and cysteine 227/cysteine 283. The tract at residues 207-298 (DPPKTHVTHH…GLPEPLMLRW (92 aa)) is alpha-3. The Ig-like C1-type domain maps to 209 to 299 (PKTHVTHHPV…LPEPLMLRWK (91 aa)). Residues 299 to 308 (KQSSLPTIPI) are connecting peptide. The chain crosses the membrane as a helical span at residues 309 to 332 (MGIVAGLVVLAAVVTGAAVAAVLW). Over 333–338 (RKKSSD) the chain is Cytoplasmic.

This sequence belongs to the MHC class I family. Heterodimer of an alpha chain and a beta chain (beta-2-microglobulin). Homodimer; disulfide-linked. Binds to LILRB1 and LILRB2.

It is found in the cell membrane. Its function is as follows. Involved in the presentation of foreign antigens to the immune system. The sequence is that of Patr class I histocompatibility antigen, alpha chain G (Patr-G) from Pan troglodytes (Chimpanzee).